A 349-amino-acid chain; its full sequence is Pinopsin (349 aa).

Polar residues predominate over residues 1–16; that stretch reads MDPTNSPQEPPHTSTP. The disordered stretch occupies residues 1–22; that stretch reads MDPTNSPQEPPHTSTPGPFDGP. Topologically, residues 1 to 32 are extracellular; it reads MDPTNSPQEPPHTSTPGPFDGPQWPHQAPRGM. A helical membrane pass occupies residues 33 to 57; it reads YLSVAVLMGIVVISASVVNGLVIVV. Residues 58–69 lie on the Cytoplasmic side of the membrane; it reads SIRYKKLRSPLN. The chain crosses the membrane as a helical span at residues 70–94; that stretch reads YILVNLAMADLLVTLCGSSVSFSNN. The Extracellular segment spans residues 95–109; it reads INGFFVFGKRLCELE. A disulfide bridge links cysteine 106 with cysteine 183. The chain crosses the membrane as a helical span at residues 110-129; it reads GFMVSLTGIVGLWSLAILAL. Residues 130–148 lie on the Cytoplasmic side of the membrane; sequence ERYVVVCRPLGDFRFQHRH. A helical transmembrane segment spans residues 149 to 172; the sequence is AVTGCAFTWVWSLLWTTPPLLGWS. At 173–196 the chain is on the extracellular side; it reads SYVPEGLRTSCGPNWYTGGSNNNS. An N-linked (GlcNAc...) asparagine glycan is attached at asparagine 194. The chain crosses the membrane as a helical span at residues 197 to 224; sequence YILTLFVTCFVMPLSLILFSYANLLMTL. The Cytoplasmic portion of the chain corresponds to 225–246; sequence RAAAAQQQESDTTQQAERQVTR. The helical transmembrane segment at 247–270 threads the bilayer; sequence MVVAMVMAFLICWLPYTTFALVVA. Topologically, residues 271 to 278 are extracellular; the sequence is TNKDIAIQ. The helical transmembrane segment at 279–303 threads the bilayer; it reads PALASLPSYFSKTATVYNPIIYVFM. Position 290 is an N6-(retinylidene)lysine (lysine 290). The Cytoplasmic segment spans residues 304–349; that stretch reads NKQFQSCLLKMLCCGHHPRGTGRTAPAAPASPTDGLRNKVTPSHPV. S-palmitoyl cysteine attachment occurs at residues cysteine 316 and cysteine 317. Residues 325-349 are disordered; that stretch reads GRTAPAAPASPTDGLRNKVTPSHPV.

Belongs to the G-protein coupled receptor 1 family. Opsin subfamily. In terms of processing, phosphorylated on some or all of the serine and threonine residues present in the C-terminal region. In terms of tissue distribution, pineal gland.

The protein localises to the membrane. Its function is as follows. Produces a slow and prolonged phototransduction response consistent with the non-visual function of pineal photoreception. This chain is Pinopsin, found in Columba livia (Rock dove).